We begin with the raw amino-acid sequence, 654 residues long: DNA-directed RNA polymerase III subunit RPC3 (654 aa).

Position 27 is a phosphothreonine (T27). 2 disordered regions span residues 381–401 (LSRK…ASLP) and 422–448 (KSLQ…EDPH). 2 positions are modified to phosphoserine: S392 and S394. Positions 429–444 (DTQEEDEEEEDLDADT) are enriched in acidic residues. Positions 581-602 (LEWNMANLLFKKEKLKQENSTL) are leucine-zipper.

This sequence belongs to the eukaryotic RPC3/POLR3C RNA polymerase subunit family. Component of the RNA polymerase III (Pol III) complex consisting of 17 subunits.

The protein localises to the cytoplasm. Its subcellular location is the nucleus. Its function is as follows. DNA-dependent RNA polymerase catalyzes the transcription of DNA into RNA using the four ribonucleoside triphosphates as substrates. Specific core component of RNA polymerase III which synthesizes small RNAs, such as 5S rRNA and tRNAs. In Saccharomyces cerevisiae (strain ATCC 204508 / S288c) (Baker's yeast), this protein is DNA-directed RNA polymerase III subunit RPC3 (RPC82).